Consider the following 491-residue polypeptide: Pyruvate carboxylase subunit A (491 aa).

Positions 1–445 (MFSKILVANR…HTHFVDEYRR (445 aa)) constitute a Biotin carboxylation domain. ATP is bound by residues Lys-116, Glu-200, and His-235. The ATP-grasp domain maps to 120–316 (KKLMKKAGVP…LVKEQIRVAS (197 aa)). Arg-291 is an active-site residue.

Heterooctamer of four A and four B subunits. The cofactor is Mg(2+). It depends on Mn(2+) as a cofactor. Requires Co(2+) as cofactor.

It carries out the reaction hydrogencarbonate + pyruvate + ATP = oxaloacetate + ADP + phosphate + H(+). Its pathway is carbohydrate biosynthesis; gluconeogenesis. Inhibited by ADP and alpha-ketoglutarate. Functionally, pyruvate carboxylase catalyzes a 2-step reaction, involving the ATP-dependent carboxylation of the covalently attached biotin in the first step and the transfer of the carboxyl group to pyruvate in the second. The chain is Pyruvate carboxylase subunit A (pycA) from Methanothermobacter thermautotrophicus (strain ATCC 29096 / DSM 1053 / JCM 10044 / NBRC 100330 / Delta H) (Methanobacterium thermoautotrophicum).